Reading from the N-terminus, the 312-residue chain is Olfactory receptor 1D2 (312 aa).

Topologically, residues M1–Q25 are extracellular. N-linked (GlcNAc...) asparagine glycosylation occurs at N5. Residues I26–I49 form a helical membrane-spanning segment. Residues N50–T57 lie on the Cytoplasmic side of the membrane. Residues P58–P79 traverse the membrane as a helical segment. At K80 to Q100 the chain is on the extracellular side. A disulfide bond links C97 and C189. Residues L101–Y120 traverse the membrane as a helical segment. The Cytoplasmic segment spans residues D121–K139. Residues L140–I158 traverse the membrane as a helical segment. The Extracellular portion of the chain corresponds to H159–H196. N-linked (GlcNAc...) asparagine glycosylation occurs at N195. Residues T197–V219 form a helical membrane-spanning segment. The Cytoplasmic portion of the chain corresponds to L220–K236. Residues A237–Y259 form a helical membrane-spanning segment. Topologically, residues L260–S271 are extracellular. Residues V272–L291 form a helical membrane-spanning segment. Residues R292–T312 are Cytoplasmic-facing.

This sequence belongs to the G-protein coupled receptor 1 family.

It localises to the cell membrane. Its function is as follows. Odorant receptor. This Gorilla gorilla gorilla (Western lowland gorilla) protein is Olfactory receptor 1D2 (OR1D2).